Reading from the N-terminus, the 454-residue chain is Tryptophanase (454 aa).

K256 carries the N6-(pyridoxal phosphate)lysine modification.

This sequence belongs to the beta-eliminating lyase family. In terms of assembly, homotetramer. Pyridoxal 5'-phosphate is required as a cofactor.

The catalysed reaction is L-tryptophan + H2O = indole + pyruvate + NH4(+). Its pathway is amino-acid degradation; L-tryptophan degradation via pyruvate pathway; indole and pyruvate from L-tryptophan: step 1/1. The polypeptide is Tryptophanase (Hyphomonas neptunium (strain ATCC 15444)).